The following is a 307-amino-acid chain: Aspartate carbamoyltransferase catalytic subunit (307 aa).

The carbamoyl phosphate site is built by Arg58 and Thr59. Lys86 is an L-aspartate binding site. Carbamoyl phosphate contacts are provided by Arg108, His136, and Gln139. L-aspartate contacts are provided by Arg169 and Arg223. Positions 264 and 265 each coordinate carbamoyl phosphate.

The protein belongs to the aspartate/ornithine carbamoyltransferase superfamily. ATCase family. Heterododecamer (2C3:3R2) of six catalytic PyrB chains organized as two trimers (C3), and six regulatory PyrI chains organized as three dimers (R2).

The enzyme catalyses carbamoyl phosphate + L-aspartate = N-carbamoyl-L-aspartate + phosphate + H(+). Its pathway is pyrimidine metabolism; UMP biosynthesis via de novo pathway; (S)-dihydroorotate from bicarbonate: step 2/3. Functionally, catalyzes the condensation of carbamoyl phosphate and aspartate to form carbamoyl aspartate and inorganic phosphate, the committed step in the de novo pyrimidine nucleotide biosynthesis pathway. In Syntrophus aciditrophicus (strain SB), this protein is Aspartate carbamoyltransferase catalytic subunit.